A 355-amino-acid polypeptide reads, in one-letter code: UDP-N-acetylglucosamine--N-acetylmuramyl-(pentapeptide) pyrophosphoryl-undecaprenol N-acetylglucosamine transferase (355 aa).

UDP-N-acetyl-alpha-D-glucosamine is bound by residues 13-15 (TGG), Asn-125, Arg-162, Ser-190, Ile-244, and Gln-289.

The protein belongs to the glycosyltransferase 28 family. MurG subfamily.

The protein localises to the cell inner membrane. It carries out the reaction di-trans,octa-cis-undecaprenyl diphospho-N-acetyl-alpha-D-muramoyl-L-alanyl-D-glutamyl-meso-2,6-diaminopimeloyl-D-alanyl-D-alanine + UDP-N-acetyl-alpha-D-glucosamine = di-trans,octa-cis-undecaprenyl diphospho-[N-acetyl-alpha-D-glucosaminyl-(1-&gt;4)]-N-acetyl-alpha-D-muramoyl-L-alanyl-D-glutamyl-meso-2,6-diaminopimeloyl-D-alanyl-D-alanine + UDP + H(+). It functions in the pathway cell wall biogenesis; peptidoglycan biosynthesis. Cell wall formation. Catalyzes the transfer of a GlcNAc subunit on undecaprenyl-pyrophosphoryl-MurNAc-pentapeptide (lipid intermediate I) to form undecaprenyl-pyrophosphoryl-MurNAc-(pentapeptide)GlcNAc (lipid intermediate II). The chain is UDP-N-acetylglucosamine--N-acetylmuramyl-(pentapeptide) pyrophosphoryl-undecaprenol N-acetylglucosamine transferase from Neisseria meningitidis serogroup B (strain ATCC BAA-335 / MC58).